A 407-amino-acid polypeptide reads, in one-letter code: DNA-directed RNA polymerase subunit Rpo1C (407 aa).

It belongs to the RNA polymerase beta' chain family. As to quaternary structure, part of the RNA polymerase complex.

The protein localises to the cytoplasm. The catalysed reaction is RNA(n) + a ribonucleoside 5'-triphosphate = RNA(n+1) + diphosphate. Functionally, DNA-dependent RNA polymerase (RNAP) catalyzes the transcription of DNA into RNA using the four ribonucleoside triphosphates as substrates. Forms part of the jaw domain. In Aeropyrum pernix (strain ATCC 700893 / DSM 11879 / JCM 9820 / NBRC 100138 / K1), this protein is DNA-directed RNA polymerase subunit Rpo1C.